A 140-amino-acid chain; its full sequence is ATP synthase epsilon chain (140 aa).

The protein belongs to the ATPase epsilon chain family. F-type ATPases have 2 components, CF(1) - the catalytic core - and CF(0) - the membrane proton channel. CF(1) has five subunits: alpha(3), beta(3), gamma(1), delta(1), epsilon(1). CF(0) has three main subunits: a, b and c.

The protein resides in the cell inner membrane. Its function is as follows. Produces ATP from ADP in the presence of a proton gradient across the membrane. The polypeptide is ATP synthase epsilon chain (Pseudoalteromonas translucida (strain TAC 125)).